The primary structure comprises 159 residues: Transcription elongation factor GreA (159 aa).

Belongs to the GreA/GreB family.

Functionally, necessary for efficient RNA polymerase transcription elongation past template-encoded arresting sites. The arresting sites in DNA have the property of trapping a certain fraction of elongating RNA polymerases that pass through, resulting in locked ternary complexes. Cleavage of the nascent transcript by cleavage factors such as GreA or GreB allows the resumption of elongation from the new 3'terminus. GreA releases sequences of 2 to 3 nucleotides. The protein is Transcription elongation factor GreA of Mycoplasmoides gallisepticum (strain R(low / passage 15 / clone 2)) (Mycoplasma gallisepticum).